The primary structure comprises 126 residues: MPERLQVYKCEVCGNIVEVLNGGIGELVCCNQDMKLMSENTVDAAKEKHVPVIEKIDGGYKVKVGAVAHPMEEKHYIQWIELLADDKCYTQFLKPGQAPEAVFLIEAAKVVAREYCNIHGHWKAEN.

Residues Cys10, Cys13, Cys29, Cys30, His49, His69, His75, Cys116, and His119 each contribute to the Fe cation site.

This sequence belongs to the desulfoferrodoxin family. As to quaternary structure, homodimer. Fe(3+) is required as a cofactor. It depends on Cu(2+) as a cofactor.

The catalysed reaction is reduced [rubredoxin] + superoxide + 2 H(+) = oxidized [rubredoxin] + H2O2. In terms of biological role, catalyzes the one-electron reduction of superoxide anion radical to hydrogen peroxide at a nonheme ferrous iron center. Plays a fundamental role in case of oxidative stress via its superoxide detoxification activity. In Desulfarculus baarsii (strain ATCC 33931 / DSM 2075 / LMG 7858 / VKM B-1802 / 2st14), this protein is Desulfoferrodoxin (dfx).